Reading from the N-terminus, the 541-residue chain is 2-hydroxyacylsphingosine 1-beta-galactosyltransferase (541 aa).

A signal peptide spans 1–20 (MKSYTPYFMLLWSAVGIARA). N-linked (GlcNAc...) asparagine glycans are attached at residues Asn-78, Asn-333, and Asn-442. The helical transmembrane segment at 472 to 492 (YFLLDIAFVLLLGAVALYFIV) threads the bilayer.

The protein belongs to the UDP-glycosyltransferase family. Brain, restricted to the oligodendrocyte-containing cell layers of cerebrum and cerebellum.

It localises to the membrane. The protein resides in the endoplasmic reticulum. The catalysed reaction is an N-acylsphing-4-enine + UDP-alpha-D-galactose = a beta-D-galactosyl-(1&lt;-&gt;1')-N-acylsphing-4-enine + UDP + H(+). The enzyme catalyses N-(2-hydroxy-hexanoyl)-sphing-4-enine + UDP-alpha-D-galactose = N-(2-hydroxy-hexanoyl)-beta-D-galactosyl-sphing-4-enine + UDP + H(+). It carries out the reaction N-(2-hydroxy-hexanoyl)-sphinganine + UDP-alpha-D-galactose = N-(2-hydroxyhexanoyl)-beta-D-galactosylsphinganine + UDP + H(+). It catalyses the reaction an N-acyl-sphingoid base + UDP-alpha-D-galactose = a D-galactosylceramide + UDP + H(+). It participates in sphingolipid metabolism; galactosylceramide biosynthesis. Functionally, catalyzes the transfer of galactose to ceramide, a key enzymatic step in the biosynthesis of galactocerebrosides, which are abundant sphingolipids of the myelin membrane of the central nervous system and peripheral nervous system. Galactosylates both hydroxy- and non-hydroxy fatty acid-containing ceramides and diglycerides. The polypeptide is 2-hydroxyacylsphingosine 1-beta-galactosyltransferase (Rattus norvegicus (Rat)).